The following is a 251-amino-acid chain: MNDKNEESIDFGYQKVARNQKKNLVADVFQSVAAKYDVMNDLMSFGIHRLWKRYTIDCSGVRRGMKVLDIAGGTGDLTAQFSRRVGAEGEVVLADINDAMLKVGRDKLRDRGIIGNVRYVQADAEELPFDDNTFDVITIAFGLRNVTDKDKALRSMLRVLKPGGRVLILEFSKPVSATLNQVYDFYSFNILPKMGQVVANDSDSYQYLAESIRMHPDQETLKSMMEAAGYEKVDYQNMTGGVVALHRGYKF.

S-adenosyl-L-methionine contacts are provided by residues T74, D95, and 123–124; that span reads DA.

It belongs to the class I-like SAM-binding methyltransferase superfamily. MenG/UbiE family.

The enzyme catalyses a 2-demethylmenaquinol + S-adenosyl-L-methionine = a menaquinol + S-adenosyl-L-homocysteine + H(+). It catalyses the reaction a 2-methoxy-6-(all-trans-polyprenyl)benzene-1,4-diol + S-adenosyl-L-methionine = a 5-methoxy-2-methyl-3-(all-trans-polyprenyl)benzene-1,4-diol + S-adenosyl-L-homocysteine + H(+). The protein operates within quinol/quinone metabolism; menaquinone biosynthesis; menaquinol from 1,4-dihydroxy-2-naphthoate: step 2/2. It participates in cofactor biosynthesis; ubiquinone biosynthesis. Its function is as follows. Methyltransferase required for the conversion of demethylmenaquinol (DMKH2) to menaquinol (MKH2) and the conversion of 2-polyprenyl-6-methoxy-1,4-benzoquinol (DDMQH2) to 2-polyprenyl-3-methyl-6-methoxy-1,4-benzoquinol (DMQH2). The protein is Ubiquinone/menaquinone biosynthesis C-methyltransferase UbiE of Idiomarina loihiensis (strain ATCC BAA-735 / DSM 15497 / L2-TR).